A 345-amino-acid chain; its full sequence is Succinylglutamate desuccinylase (345 aa).

Residues His64, Glu67, and His161 each contribute to the Zn(2+) site. Residue Glu225 is part of the active site.

Belongs to the AspA/AstE family. Succinylglutamate desuccinylase subfamily. The cofactor is Zn(2+).

The catalysed reaction is N-succinyl-L-glutamate + H2O = L-glutamate + succinate. It participates in amino-acid degradation; L-arginine degradation via AST pathway; L-glutamate and succinate from L-arginine: step 5/5. Functionally, transforms N(2)-succinylglutamate into succinate and glutamate. The polypeptide is Succinylglutamate desuccinylase (Shewanella piezotolerans (strain WP3 / JCM 13877)).